Here is a 178-residue protein sequence, read N- to C-terminus: Hypoxanthine phosphoribosyltransferase (178 aa).

Arg43 and Gly44 together coordinate diphosphate. Glu99 lines the GMP pocket. Glu99 provides a ligand contact to IMP. Glu99 and Asp100 together coordinate Mg(2+). Asp103 functions as the Proton acceptor in the catalytic mechanism. Residues 103-108, Lys131, and Asp159 each bind GMP; that span reads DSGNTL. IMP is bound by residues 103-108 and Lys131; that span reads DSGNTL. Arg165 is a binding site for diphosphate.

It belongs to the purine/pyrimidine phosphoribosyltransferase family. Homotetramer. It depends on Mg(2+) as a cofactor.

The protein resides in the cytoplasm. It carries out the reaction IMP + diphosphate = hypoxanthine + 5-phospho-alpha-D-ribose 1-diphosphate. The catalysed reaction is GMP + diphosphate = guanine + 5-phospho-alpha-D-ribose 1-diphosphate. It functions in the pathway purine metabolism; IMP biosynthesis via salvage pathway; IMP from hypoxanthine: step 1/1. Functionally, purine salvage pathway enzyme which catalyzes the transfer of the ribosyl-5-phosphate group from 5-phospho-alpha-D-ribose 1-diphosphate (PRPP) to the N9 position of hypoxanthine to yield IMP (inosine 5'-monophosphate). To a lesser extent, can also act on guanine leading to GMP, but shows a highly less efficient activity with xanthine. In Shigella flexneri, this protein is Hypoxanthine phosphoribosyltransferase (hpt).